The following is a 321-amino-acid chain: UDP-N-acetylenolpyruvoylglucosamine reductase (321 aa).

An FAD-binding PCMH-type domain is found at 36–203 (FRAGGLAEVM…TGALFEGYPE (168 aa)). R183 is a catalytic residue. The active-site Proton donor is the S232. E302 is an active-site residue.

This sequence belongs to the MurB family. FAD serves as cofactor.

It localises to the cytoplasm. It carries out the reaction UDP-N-acetyl-alpha-D-muramate + NADP(+) = UDP-N-acetyl-3-O-(1-carboxyvinyl)-alpha-D-glucosamine + NADPH + H(+). It participates in cell wall biogenesis; peptidoglycan biosynthesis. In terms of biological role, cell wall formation. The protein is UDP-N-acetylenolpyruvoylglucosamine reductase of Agrobacterium fabrum (strain C58 / ATCC 33970) (Agrobacterium tumefaciens (strain C58)).